The chain runs to 303 residues: Recombination-associated protein RdgC (303 aa).

Belongs to the RdgC family.

Its subcellular location is the cytoplasm. The protein localises to the nucleoid. Its function is as follows. May be involved in recombination. In Salmonella agona (strain SL483), this protein is Recombination-associated protein RdgC.